Consider the following 376-residue polypeptide: Serine/threonine-protein kinase-transforming protein mos (376 aa).

The 283-residue stretch at 94 to 376 folds into the Protein kinase domain; it reads VCLMHRLGSG…KALADSIEPM (283 aa). ATP is bound by residues 100-108 and K121; that span reads LGSGGFGSV. Catalysis depends on D229, which acts as the Proton acceptor.

The protein belongs to the protein kinase superfamily. Ser/Thr protein kinase family.

The enzyme catalyses L-seryl-[protein] + ATP = O-phospho-L-seryl-[protein] + ADP + H(+). It catalyses the reaction L-threonyl-[protein] + ATP = O-phospho-L-threonyl-[protein] + ADP + H(+). This chain is Serine/threonine-protein kinase-transforming protein mos (V-MOS), found in Moloney murine sarcoma virus (strain m1) (MoMSV).